We begin with the raw amino-acid sequence, 150 residues long: Protein Smg homolog (150 aa).

Belongs to the Smg family.

This chain is Protein Smg homolog, found in Methylobacillus flagellatus (strain ATCC 51484 / DSM 6875 / VKM B-1610 / KT).